The chain runs to 197 residues: MSSLLEQLIEAFRVLPGVGQKSAQRMAYHVLEREREGGRRLAAALANAVEKVGHCVQCRDFTESEVCAICANSGRDRQQLCVVESPADRLAIEHATGYRGVYFILQGRLSPLDGIGPRELGLDRLAERLAAGEVTEMIIATNATVEGEATAHYLAQLARQHSVRPSRLAQGMPLGGELEYVDRGTLSHAFGTRSEVL.

The segment at 55–70 (CVQCRDFTESEVCAIC) adopts a C4-type zinc-finger fold. A Toprim domain is found at 78–173 (QQLCVVESPA…RPSRLAQGMP (96 aa)).

Belongs to the RecR family.

Its function is as follows. May play a role in DNA repair. It seems to be involved in an RecBC-independent recombinational process of DNA repair. It may act with RecF and RecO. In Xanthomonas campestris pv. campestris (strain 8004), this protein is Recombination protein RecR.